The primary structure comprises 642 residues: AEKIKICLQKQVNSSFSLHNGFGGNLYATEEKRMFELVKPKAGASVLNQSTWICFGDSRTDQSNSAFPRSADVSAKTAEKFRSLSGGSLMLSMFGPPGKVDYLYQGCGKHKVFYEGVNWSPHTAIDCYRKNWTDIKLNFQKSIYELASQSHCMSLVNALDKTIPLQATKGVAKNCNNSFLKNPALYTQEVKPLDQICGEENLAFFTLPTQFGTYECKLHLVASCYFIYDSKEVYNKRGCGNYFQVIYDSSGKVVGGLDNRVSPYTGNSGDTPTMQCDMLQLKPGRYSVRSSPRFLLMPERSYCFDMKEKGLVTAVQSIWGKGRKSDYAVDQACLSTPGCMLIQKQKPYIGEADDHHGDQEMRELLSGLDYEARCISQSGWVNETSPFTEEYLLPPKFGRCPLAAKEESIPKIPDGLLIPTSGTDTTVTKPKSRIFGIDDLIIGLFFVAIVEAGIGGYLLGSRKESGGGVTKESAEKGFEKIGNDIQILRSSTNIAIEKLNDRISHDEQAIRDLTLEIENARSEALLGELGIIRALLVGNISIGLQESLWELASEITNRAGDLAVEVSPGCWIIDNNICDQSCQNFIFKFNETAPVPTIPPLDTKIDLQSDPFYWGSSLGLAITTPISLAALVISGIAICRTK.

Ala-1 is a signal peptide. The tract at residues 2-27 is fusion domain-1; that stretch reads EKIKICLQKQVNSSFSLHNGFGGNLY. At 2 to 617 the chain is on the extracellular side; it reads EKIKICLQKQ…QSDPFYWGSS (616 aa). 7 cysteine pairs are disulfide-bonded: Cys-7–Cys-570, Cys-107–Cys-152, Cys-127–Cys-175, Cys-197–Cys-239, Cys-216–Cys-303, Cys-224–Cys-276, and Cys-333–Cys-339. 2 N-linked (GlcNAc...) asparagine; by host glycosylation sites follow: Asn-13 and Asn-48. An esterase domain-1 region spans residues 28–138; it reads ATEEKRMFEL…RKNWTDIKLN (111 aa). Residue Ser-58 is the Nucleophile of the active site. Asn-131 carries an N-linked (GlcNAc...) asparagine; by host glycan. An N-acetyl-9-O-acetylneuraminic acid binding region spans residues 138-297; sequence NFQKSIYELA…VRSSPRFLLM (160 aa). An esterase domain-2 region spans residues 298-352; it reads PERSYCFDMKEKGLVTAVQSIWGKGRKSDYAVDQACLSTPGCMLIQKQKPYIGEA. Catalysis depends on charge relay system residues Asp-353 and His-356. The fusion domain-2 stretch occupies residues 353–638; that stretch reads DDHHGDQEMR…AALVISGIAI (286 aa). Asn-382 carries an N-linked (GlcNAc...) asparagine; by host glycan. A helical transmembrane segment spans residues 618–638; the sequence is LGLAITTPISLAALVISGIAI. Over 639–642 the chain is Cytoplasmic; sequence CRTK.

It belongs to the influenza type C/coronaviruses hemagglutinin-esterase family. Homotrimer of disulfide-linked HEF1-HEF2. In terms of processing, in natural infection, inactive HEF is matured into HEF1 and HEF2 outside the cell by one or more trypsin-like, arginine-specific endoprotease.

The protein resides in the virion membrane. It is found in the host cell membrane. It carries out the reaction N-acetyl-9-O-acetylneuraminate + H2O = N-acetylneuraminate + acetate + H(+). The enzyme catalyses N-acetyl-4-O-acetylneuraminate + H2O = N-acetylneuraminate + acetate + H(+). Its function is as follows. Binds to the N-acetyl-9-O-acetylneuraminic acid residues on the cell surface, bringing about the attachment of the virus particle to the cell. Plays a major role in the determination of host range restriction and virulence. Class I viral fusion protein. Responsible for penetration of the virus into the cell cytoplasm by mediating the fusion of the membrane of the endocytosed virus particle with the endosomal membrane. Low pH in endosomes induce an irreversible conformational change in HEF2, releasing the fusion hydrophobic peptide. Several trimers are required to form a competent fusion pore. Displays a receptor-destroying activity which is a neuraminidate-O-acetyl esterase. This activity cleaves off any receptor on the cell surface, which would otherwise prevent virions release. These cleavages prevent self-aggregation and ensure the efficient spread of the progeny virus from cell to cell. This Influenza C virus (strain C/Pig/Beijing/439/1982) protein is Hemagglutinin-esterase-fusion glycoprotein (HE).